The chain runs to 516 residues: MQVTSVGHAGFLIQTQAGSILCDPWVNPAYFASWFPFPDNSGLDWGALGECDYLYVSHLHKDHFDAENLRAHVNKDAVVLLPDFPVPDLRNELQKLGFHRFFETTDSVKHRLRGPNGDLDVMIIALRAPADGPIGDSALVVADGETTAFNMNDARPVDLDVLASEFGHIDVHMLQYSGAIWYPMVYDMPARAKDAFGAQKRQRQMDRARQYIAQVGATWVVPSAGPPCFLAPELRHLNDDGSDPANIFPDQMVFLDQMRAHGQDGGLLMIPGSTADFTGTTLNSLRHPLPAEQVEAIFTTDKAAYIADYADRMAPVLAAQKAGWAAAAGEPLLQPLRTLFEPIMLQSNEICDGIGYPVELAIGPETIVLDFPKRAVREPIPDERFRYGFAIAPELVRTVLRDNEPDWVNTIFLSTRFRAWRVGGYNEYLYTFFKCLTDERIAYADGWFAEAHDDSSSITLNGWEIQRRCPHLKADLSKFGVVEGNTLTCNLHGWQWRLDDGRCLTARGHQLRSSRP.

The Rieske domain occupies 429-516 (LYTFFKCLTD…RGHQLRSSRP (88 aa)). The [2Fe-2S] cluster site is built by Cys-469, His-471, Cys-489, and His-492.

Requires [2Fe-2S] cluster as cofactor.

The sequence is that of Putative Rieske 2Fe-2S iron-sulfur protein MT3926 from Mycobacterium tuberculosis (strain CDC 1551 / Oshkosh).